A 1763-amino-acid chain; its full sequence is Non-reducing polyketide synthase PKS19 (1763 aa).

Positions Gly-20–His-261 are N-terminal acylcarrier protein transacylase domain (SAT). Positions Ser-390–Glu-822 constitute a Ketosynthase family 3 (KS3) domain. Catalysis depends on for beta-ketoacyl synthase activity residues Cys-561, His-696, and His-740. The malonyl-CoA:ACP transacylase (MAT) domain stretch occupies residues Phe-922–Leu-1227. The interval His-1307–Leu-1439 is N-terminal hotdog fold. Residues His-1307–Asn-1609 form the PKS/mFAS DH domain. The product template (PT) domain stretch occupies residues Gly-1334–Gly-1588. The active-site Proton acceptor; for dehydratase activity is His-1339. The C-terminal hotdog fold stretch occupies residues Val-1461–Asn-1609. The active-site Proton donor; for dehydratase activity is the Asp-1522. A disordered region spans residues Ala-1619 to Gly-1690. The span at Pro-1635–Pro-1647 shows a compositional bias: basic residues. The 75-residue stretch at Ala-1689–Arg-1763 folds into the Carrier domain. Ser-1726 bears the O-(pantetheine 4'-phosphoryl)serine mark.

In terms of biological role, non-reducing polyketide synthase that mediates the biosynthesis of alternariol (AOH), a micotoxin that seems not to be involved in virulence and oxidative stress tolerance. PKS19 alone is sufficient for AOH synthesis which is initiated by priming with acetyl-CoA, followed by sequential condensations of 6 malonyl-CoA units. The sequence is that of Non-reducing polyketide synthase PKS19 from Phaeosphaeria nodorum (strain SN15 / ATCC MYA-4574 / FGSC 10173) (Glume blotch fungus).